We begin with the raw amino-acid sequence, 391 residues long: 3-ketoacyl-CoA thiolase (391 aa).

The Acyl-thioester intermediate role is filled by cysteine 95. Residues histidine 347 and cysteine 377 each act as proton acceptor in the active site.

This sequence belongs to the thiolase-like superfamily. Thiolase family. Heterotetramer of two alpha chains (FadB) and two beta chains (FadA).

Its subcellular location is the cytoplasm. The catalysed reaction is an acyl-CoA + acetyl-CoA = a 3-oxoacyl-CoA + CoA. It participates in lipid metabolism; fatty acid beta-oxidation. Its function is as follows. Catalyzes the final step of fatty acid oxidation in which acetyl-CoA is released and the CoA ester of a fatty acid two carbons shorter is formed. The protein is 3-ketoacyl-CoA thiolase of Marinomonas sp. (strain MWYL1).